Reading from the N-terminus, the 468-residue chain is Tyrosine phenol-lyase (468 aa).

Lys260 carries the post-translational modification N6-(pyridoxal phosphate)lysine.

This sequence belongs to the beta-eliminating lyase family. In terms of assembly, homotetramer. Pyridoxal 5'-phosphate serves as cofactor.

It catalyses the reaction L-tyrosine + H2O = phenol + pyruvate + NH4(+). This Lacrimispora saccharolytica (strain ATCC 35040 / DSM 2544 / NRCC 2533 / WM1) (Clostridium saccharolyticum) protein is Tyrosine phenol-lyase.